A 412-amino-acid polypeptide reads, in one-letter code: MQFFNFLLFYPVFMSIYWIVGSIYFYFTREIRYSLNKKPDINVDELEGITFLLACYNESETIEDTLSNVLALKYEKKEIIIINDGSSDNTAELIYKIKENNDFIFVDLQENRGKANALNQGIKQASYDYVMCLDADTIVDQDAPYYMIENFKHDPKLGAVTGNPRIRNKSSILGKIQTIEYASLIGCIKRSQTLAGAVNTISGVFTLFKKSAVVDVGYWDTDMITEDIAVSWKLHLRGYRIKYEPLAMCWMLVPETLGGLWKQRVRWAQGGHEVLLRDFFSTMKTKRFPLYILMFEQIISILWVYIVLLYLGYLFITANFLDYTFMTYSFSIFLLSSFTMTFINVIQFTVALFIDSRYEKKNMAGLIFVSWYPTVYWIINAAVVLVAFPKALKRKKGGYATWSSPDRGNTQR.

A run of 4 helical transmembrane segments spans residues 6 to 26 (FLLF…IYFY), 298 to 318 (IISI…FITA), 332 to 352 (IFLL…TVAL), and 366 to 386 (LIFV…VVLV).

The protein belongs to the glycosyltransferase 2 family.

Its subcellular location is the cell membrane. N-acetylglucosaminyltransferase that catalyzes the polymerization of single monomer units of UDP-N-acetylglucosamine to produce the linear homomer poly-beta-1,6-N-acetyl-D-glucosamine (PNAG, also referred to as PIA), a biofilm adhesin polysaccharide. Requires IcaD for full activity. The polypeptide is Poly-beta-1,6-N-acetyl-D-glucosamine synthase (icaA) (Staphylococcus aureus (strain NCTC 8325 / PS 47)).